Reading from the N-terminus, the 217-residue chain is Phosphoenolpyruvate guanylyltransferase (217 aa).

Positions 150, 165, and 168 each coordinate phosphoenolpyruvate.

It belongs to the CofC family.

The enzyme catalyses phosphoenolpyruvate + GTP + H(+) = enolpyruvoyl-2-diphospho-5'-guanosine + diphosphate. The protein operates within cofactor biosynthesis; coenzyme F420 biosynthesis. Guanylyltransferase that catalyzes the activation of phosphoenolpyruvate (PEP) as enolpyruvoyl-2-diphospho-5'-guanosine, via the condensation of PEP with GTP. It is involved in the biosynthesis of coenzyme F420, a hydride carrier cofactor. This Mycobacterium ulcerans (strain Agy99) protein is Phosphoenolpyruvate guanylyltransferase.